Reading from the N-terminus, the 815-residue chain is Phenylalanine--tRNA ligase beta subunit (815 aa).

Positions 39–153 (ASHAQGVVVG…NVPDLGQPVG (115 aa)) constitute a tRNA-binding domain. One can recognise a B5 domain in the interval 414-498 (KSAEPVKLRR…RLVGFDRFEA (85 aa)). Residues D476, D482, E485, and E486 each contribute to the Mg(2+) site. The 94-residue stretch at 721–814 (PTVPAMELDL…LVKQFSAELR (94 aa)) folds into the FDX-ACB domain.

This sequence belongs to the phenylalanyl-tRNA synthetase beta subunit family. Type 1 subfamily. In terms of assembly, tetramer of two alpha and two beta subunits. Mg(2+) serves as cofactor.

The protein resides in the cytoplasm. It catalyses the reaction tRNA(Phe) + L-phenylalanine + ATP = L-phenylalanyl-tRNA(Phe) + AMP + diphosphate + H(+). The sequence is that of Phenylalanine--tRNA ligase beta subunit from Prochlorococcus marinus (strain MIT 9313).